The following is a 638-amino-acid chain: Glucans biosynthesis glucosyltransferase H (638 aa).

6 consecutive transmembrane segments (helical) span residues F60 to W82, F97 to V119, I415 to V437, L464 to L486, L499 to Y521, and L578 to S600.

Belongs to the glycosyltransferase 2 family. OpgH subfamily.

The protein resides in the cell inner membrane. It participates in glycan metabolism; osmoregulated periplasmic glucan (OPG) biosynthesis. Involved in the biosynthesis of osmoregulated periplasmic glucans (OPGs). This Xylella fastidiosa (strain 9a5c) protein is Glucans biosynthesis glucosyltransferase H.